The primary structure comprises 446 residues: ATP synthase subunit b-delta (446 aa).

Residues 1-168 form an ATP synthase subunit b region; that stretch reads MSTFIGQLFG…PATADVDYPL (168 aa). A helical membrane pass occupies residues 4 to 24; the sequence is FIGQLFGFAVIVYLVWRFIVP. The interval 169-446 is ATP synthase subunit delta; the sequence is LAKMRSASRR…LAAAEARLPD (278 aa).

This sequence in the N-terminal section; belongs to the ATPase B chain family. The protein in the C-terminal section; belongs to the ATPase delta chain family. As to quaternary structure, F-type ATPases have 2 components, F(1) - the catalytic core - and F(0) - the membrane proton channel. F(1) has five subunits: alpha(3), beta(3), gamma(1), delta(1), epsilon(1). F(0) has three main subunits: a(1), b(2) and c(10-14). The alpha and beta chains form an alternating ring which encloses part of the gamma chain. F(1) is attached to F(0) by a central stalk formed by the gamma and epsilon chains, while a peripheral stalk is formed by the delta and b chains.

It localises to the cell membrane. Functionally, f(1)F(0) ATP synthase produces ATP from ADP in the presence of a proton or sodium gradient. F-type ATPases consist of two structural domains, F(1) containing the extramembraneous catalytic core and F(0) containing the membrane proton channel, linked together by a central stalk and a peripheral stalk. During catalysis, ATP synthesis in the catalytic domain of F(1) is coupled via a rotary mechanism of the central stalk subunits to proton translocation. Its function is as follows. This fusion protein includes a component of the F(0) channel (subunit b) and of the F(1) subunit (subunit delta). Two copies of subunit b and one of delta together form the peripheral 'stator' stalk which links F(1) to F(0). This chain is ATP synthase subunit b-delta (atpFH), found in Mycobacterium tuberculosis (strain CDC 1551 / Oshkosh).